The following is a 60-amino-acid chain: MSGKLKITQVRSLVGRNEKHRRIVRALGLKRMHMTVEHTNNPAIMGMVKKIPHLVTVEEV.

Belongs to the universal ribosomal protein uL30 family. As to quaternary structure, part of the 50S ribosomal subunit.

This Desulforapulum autotrophicum (strain ATCC 43914 / DSM 3382 / VKM B-1955 / HRM2) (Desulfobacterium autotrophicum) protein is Large ribosomal subunit protein uL30.